We begin with the raw amino-acid sequence, 504 residues long: L-carnitine/gamma-butyrobetaine antiporter (504 aa).

12 consecutive transmembrane segments (helical) span residues I10–V30, W51–F71, I92–I112, G143–V163, F195–V215, L231–L251, S263–M283, W316–A336, L347–G367, W398–A418, L446–L466, and A475–I495.

Belongs to the BCCT transporter (TC 2.A.15) family. CaiT subfamily. Homotrimer.

Its subcellular location is the cell inner membrane. The catalysed reaction is 4-(trimethylamino)butanoate(in) + (R)-carnitine(out) = 4-(trimethylamino)butanoate(out) + (R)-carnitine(in). It participates in amine and polyamine metabolism; carnitine metabolism. Functionally, catalyzes the exchange of L-carnitine for gamma-butyrobetaine. The polypeptide is L-carnitine/gamma-butyrobetaine antiporter (Escherichia coli O81 (strain ED1a)).